The primary structure comprises 210 residues: Redox-sensing transcriptional repressor Rex (210 aa).

The H-T-H motif DNA-binding region spans 17–56 (KYHRYLGDLLDRDIQRISSKELSDIIGFTASQIRQDLNNF). 91–96 (GAGNLG) contacts NAD(+).

Belongs to the transcriptional regulatory Rex family. In terms of assembly, homodimer.

Its subcellular location is the cytoplasm. Modulates transcription in response to changes in cellular NADH/NAD(+) redox state. This chain is Redox-sensing transcriptional repressor Rex, found in Clostridioides difficile (strain 630) (Peptoclostridium difficile).